The chain runs to 84 residues: Acyl carrier protein MbtL (84 aa).

Residues 6-81 (STVSTTLLSI…ELEAAIAAKY (76 aa)) enclose the Carrier domain. O-(pantetheine 4'-phosphoryl)serine is present on serine 41.

In terms of processing, 4'-phosphopantetheine is transferred from CoA to a specific serine of apo-ACP, leading to the activated holo-ACP form.

The protein localises to the cytoplasm. It functions in the pathway siderophore biosynthesis; mycobactin biosynthesis. Functionally, acyl carrier protein involved in the formation of acyl-S-ACP intermediates within the mycobactin biosynthesis process. The aliphatic chains carried by ACP are subsequently transferred on to the mycobactin core by MbtK. The protein is Acyl carrier protein MbtL (mbtL) of Mycobacterium bovis (strain ATCC BAA-935 / AF2122/97).